Consider the following 197-residue polypeptide: MEGNPYLDRLYEMKVFGKWDPTEVEVRDPGLKDYICLKPMYLPHTGGRHAKKRFAKAEVPIVERLINRVMRTEKNTGKKHLAYNIVKRAFDIIHERTGENPIQVLVQALENAAPREETTTIIYGGISYHEAVDSSPQRRLDIALRLITEGAQQRAFRNPKPIEECLAEEIIAAARYDTECHSIRRKEEIERIAEAAR.

The protein belongs to the universal ribosomal protein uS7 family. In terms of assembly, part of the 30S ribosomal subunit.

Functionally, one of the primary rRNA binding proteins, it binds directly to 16S rRNA where it nucleates assembly of the head domain of the 30S subunit. Is located at the subunit interface close to the decoding center. The protein is Small ribosomal subunit protein uS7 of Methanopyrus kandleri (strain AV19 / DSM 6324 / JCM 9639 / NBRC 100938).